Reading from the N-terminus, the 305-residue chain is Ribonuclease Z (305 aa).

The Zn(2+) site is built by histidine 61, histidine 63, aspartate 65, histidine 66, histidine 138, aspartate 208, and histidine 266. Aspartate 65 serves as the catalytic Proton acceptor.

It belongs to the RNase Z family. In terms of assembly, homodimer. The cofactor is Zn(2+).

The catalysed reaction is Endonucleolytic cleavage of RNA, removing extra 3' nucleotides from tRNA precursor, generating 3' termini of tRNAs. A 3'-hydroxy group is left at the tRNA terminus and a 5'-phosphoryl group is left at the trailer molecule.. In terms of biological role, zinc phosphodiesterase, which displays some tRNA 3'-processing endonuclease activity. Probably involved in tRNA maturation, by removing a 3'-trailer from precursor tRNA. The protein is Ribonuclease Z of Methanosarcina acetivorans (strain ATCC 35395 / DSM 2834 / JCM 12185 / C2A).